Consider the following 55-residue polypeptide: Small integral membrane protein 11 (55 aa).

A helical membrane pass occupies residues V9–G29. A coiled-coil region spans residues Q34–A54.

Expressed in brain, heart, kidney, thymus, liver, stomach, muscle, lung, testis, ovary, skin and eye.

The protein localises to the membrane. The protein is Small integral membrane protein 11 of Mus musculus (Mouse).